A 261-amino-acid polypeptide reads, in one-letter code: Carnitinyl-CoA dehydratase (261 aa).

The active-site Nucleophile is the Glu111. Catalysis depends on Glu131, which acts as the Proton acceptor.

Belongs to the enoyl-CoA hydratase/isomerase family.

It catalyses the reaction (R)-carnitinyl-CoA = crotonobetainyl-CoA + H2O. It functions in the pathway amine and polyamine metabolism; carnitine metabolism. Catalyzes the reversible dehydration of L-carnitinyl-CoA to crotonobetainyl-CoA. This Escherichia coli (strain SMS-3-5 / SECEC) protein is Carnitinyl-CoA dehydratase.